The chain runs to 656 residues: DNA mismatch repair protein MutL (656 aa).

The tract at residues 385-427 is disordered; the sequence is DNSDSLTEQNSTDYTVNQPETGSVSEKITDRTVESSNEFTDRT. Polar residues predominate over residues 387-410; the sequence is SDSLTEQNSTDYTVNQPETGSVSE. A compositionally biased stretch (basic and acidic residues) spans 411–427; that stretch reads KITDRTVESSNEFTDRT.

It belongs to the DNA mismatch repair MutL/HexB family.

In terms of biological role, this protein is involved in the repair of mismatches in DNA. It is required for dam-dependent methyl-directed DNA mismatch repair. May act as a 'molecular matchmaker', a protein that promotes the formation of a stable complex between two or more DNA-binding proteins in an ATP-dependent manner without itself being part of a final effector complex. The protein is DNA mismatch repair protein MutL of Lactococcus lactis subsp. cremoris (strain SK11).